Reading from the N-terminus, the 278-residue chain is MSSLGSPVRAYDFLLKFLLVGDSDVGKGEILASLQDGAAESPYGHPAGIDHKTTTILLDGRRVKLQLWDTSGQGRFCTIFRSYSRGAQGVVLVYDIANRWSFDGINRWIKEIDEHAPGVPKILVGNRLHLAFKRQVPTEQAQAYAERLGVTFFEVSPLCNFNITESFTELARIVLLRHGMDRLWRPSKVLSLQELCCRAVVSCTPGHLVDKLPLPVALRSHLKSFSMASGLNTRMMHGRSYSLTANSSHKRNSFRKVRTIRPPQSPPRNCARNSCKIS.

GTP is bound by residues Ser23, Gly26, and Lys27. Positions 41 to 49 are switch-I; it reads SPYGHPAGI. Residue Asp69 participates in Mg(2+) binding. Gly72, Asn126, and Arg127 together coordinate GTP. Positions 72–88 are switch-II; sequence GQGRFCTIFRSYSRGAQ. The 54-residue stretch at 175–228 folds into the SOCS box domain; that stretch reads LLRHGMDRLWRPSKVLSLQELCCRAVVSCTPGHLVDKLPLPVALRSHLKSFSMA. Positions 245-278 are disordered; the sequence is ANSSHKRNSFRKVRTIRPPQSPPRNCARNSCKIS. Residues 248 to 259 are compositionally biased toward basic residues; the sequence is SHKRNSFRKVRT. Cys270 carries the S-palmitoyl cysteine lipid modification. Cys275 carries S-geranylgeranyl cysteine lipidation.

Belongs to the small GTPase superfamily. Rab family. In terms of assembly, component of the cullin-5-RING E3 ubiquitin-protein ligase complex (ECS(RAB40B) complex) composed of CUL5, Elongin BC (ELOB and ELOC), RNF7/RBX2 and RAB40B; RAB40B interaction with ECS complex is GTP-independent. Binds (GTP-bound) LIMA1; interaction promotes LIMA1 subcellular localization in lamellipodia during cell migration. Interacts (GTP-bound) with TKS5/SH3PXD2A (via PX domain); interaction promotes invadopodia-mediated extracellular matrix degradation. Mg(2+) is required as a cofactor.

The protein resides in the cell membrane. Its subcellular location is the cytoplasm. It is found in the cytosol. It localises to the cell projection. The protein localises to the lamellipodium membrane. The protein resides in the ruffle. It catalyses the reaction GTP + H2O = GDP + phosphate + H(+). It functions in the pathway protein modification; protein ubiquitination. With respect to regulation, regulated by guanine nucleotide exchange factors (GEFs) which promote the exchange of bound GDP for free GTP. Regulated by GTPase activating proteins (GAPs) which increase the GTP hydrolysis activity. Inhibited by GDP dissociation inhibitors (GDIs). Functionally, RAB40B small GTPase acts as substrate-recognition components of the ECS(RAB40B) E3 ubiquitin ligase complex which mediates the ubiquitination of target proteins. The Rab40 subfamily belongs to the Rab family that are key regulators of intracellular membrane trafficking, from the formation of transport vesicles to their fusion with membranes. Rabs cycle between an inactive GDP-bound form and an active GTP-bound form that is able to recruit to membranes different sets of downstream effectors directly responsible for vesicle formation, movement, tethering and fusion. As part of the ECS(RAB40B) complex, GTP-bound RAB40B promotes LIMA1/EPLIN ubiquitination and degradation, thereby regulating leading-edge actin dynamics during cell migration. As part of the ECS(RAB40B) complex, GTP-bound RAB40B also ubiquitinates RAP2A GTPase which promotes its localization to lamellipodia and activation to drive cell migration. The ECS(RAB40B) complex does not mediate canonical ubiquitin-dependent degradation of RAP2. RAB40B also binds TKS5/SH3PXD2A effector independently from ECS complex to promote invadopodia-mediated extracellular matrix degradation. The polypeptide is Ras-related protein Rab-40B (Mus musculus (Mouse)).